Consider the following 605-residue polypeptide: Leucine-rich repeat-containing protein 40 (605 aa).

The segment at 1 to 21 (MSRFKRGGKAPDPLSGFRAPK) is disordered. LRR repeat units lie at residues 83 to 104 (DLTKLILASNKLQALSEDISLL), 106 to 127 (ALVVLDIHDNQIASLPCAIREL), 129 to 151 (NLQKLNISHNKIKQLPNELQHLQ), 152 to 173 (NLKSFLLQHNQLEELPDSIGHL), 175 to 196 (ILEELDVSNNCLRSVSSSVGQL), 198 to 219 (GLVKFNLSSNKLTALPTEIGKM), 221 to 242 (NLRQLDCTSNLLENVPASVAGM), 244 to 265 (SLEQLYLRQNKLTYLPELPFLT), 266 to 287 (KLKELHVGNNQIQTLGPEHLQN), 290 to 311 (SLSVLELRYNKLKVLPKEISLL), 313 to 335 (GLERLDLSNNDIGSLPDTLGSLP), 336 to 357 (NLKSLQLDGNPLRGIRRDILNK), 429 to 450 (PITTVNFSKNQLTEVPARIVEM), 453 to 475 (SVYDVNLGFNKISSISLNLCMLL), 476 to 497 (KLTHLDMRNNALASLPPEMEAL), 499 to 520 (RLQSIILSFNRFKHFPDVLYTI), 522 to 543 (NLETILISSNQIGSIDPIQLKK), 546 to 567 (KLSTLDLQNNDLLQIPPALGNC), and 569 to 590 (SLRALHLEGNPFRNPRATILAK).

The chain is Leucine-rich repeat-containing protein 40 (lrrc40) from Xenopus laevis (African clawed frog).